Reading from the N-terminus, the 294-residue chain is NAD kinase (294 aa).

Asp74 (proton acceptor) is an active-site residue. Residues 74–75 (DG), Lys79, 149–150 (NE), Asp179, 190–195 (TGYSLS), and Ala214 each bind NAD(+).

The protein belongs to the NAD kinase family. Requires a divalent metal cation as cofactor.

The protein resides in the cytoplasm. It carries out the reaction NAD(+) + ATP = ADP + NADP(+) + H(+). Involved in the regulation of the intracellular balance of NAD and NADP, and is a key enzyme in the biosynthesis of NADP. Catalyzes specifically the phosphorylation on 2'-hydroxyl of the adenosine moiety of NAD to yield NADP. The chain is NAD kinase from Christiangramia forsetii (strain DSM 17595 / CGMCC 1.15422 / KT0803) (Gramella forsetii).